The following is a 1468-amino-acid chain: DNA polymerase III PolC-type (1468 aa).

Positions 197–217 (QKSLEDSAPPSEEVTPTQNYD) are disordered. The Exonuclease domain occupies 430-586 (YVVFDVETTG…YDAEATGRLL (157 aa)).

Belongs to the DNA polymerase type-C family. PolC subfamily.

It is found in the cytoplasm. The enzyme catalyses DNA(n) + a 2'-deoxyribonucleoside 5'-triphosphate = DNA(n+1) + diphosphate. Its function is as follows. Required for replicative DNA synthesis. This DNA polymerase also exhibits 3' to 5' exonuclease activity. The protein is DNA polymerase III PolC-type of Streptococcus agalactiae serotype III (strain NEM316).